The sequence spans 30 residues: Varv peptide H (30 aa).

Positions 1–30 form a cross-link, cyclopeptide (Gly-Asn); the sequence is GLPVCGETCFGGTCNTPGCSCETWPVCSRN. 3 disulfides stabilise this stretch: cysteine 5/cysteine 19, cysteine 9/cysteine 21, and cysteine 14/cysteine 27.

Post-translationally, this is a cyclic peptide.

Functionally, probably participates in a plant defense mechanism. This chain is Varv peptide H, found in Viola arvensis (European field pansy).